The sequence spans 850 residues: Vacuolar membrane protease (850 aa).

Residues 1–20 are Cytoplasmic-facing; that stretch reads MASSRAQWFNPIAFTPWPVT. The chain crosses the membrane as a helical span at residues 21–41; the sequence is CITTIVYLALLIPILVINLVV. Over 42–282 the chain is Vacuolar; that stretch reads PSAPETNPKG…DGKSKDQNKV (241 aa). Residues Asn-53, Asn-116, and Asn-119 are each glycosylated (N-linked (GlcNAc...) asparagine). 2 residues coordinate Zn(2+): His-175 and Asp-187. The active-site Proton acceptor is the Glu-221. Glu-222 is a binding site for Zn(2+). Residues 283–303 form a helical membrane-spanning segment; that stretch reads NSGTGTLGVWFDMFGTAFAVF. Over 304–308 the chain is Cytoplasmic; the sequence is RLHTL. A helical membrane pass occupies residues 309–329; that stretch reads FAISVALLVIAPLVIFVTSVI. At 330–363 the chain is on the vacuolar side; that stretch reads LSKTDRMYLFSMSKSLEGTGDQVSLRGLRGFSRT. A helical transmembrane segment spans residues 364–384; that stretch reads PIILVIATTIPICLAYLLEKV. The Cytoplasmic portion of the chain corresponds to 385 to 393; sequence NPYIVHSSQ. The helical transmembrane segment at 394–414 threads the bilayer; that stretch reads FSVWSMMFSAWIFLAWFLACA. Residues 415 to 425 are Vacuolar-facing; sequence ADFFRPSALHR. A helical membrane pass occupies residues 426 to 446; the sequence is AYSYTWIFIATWIMLVINTVY. Topologically, residues 447–529 are cytoplasmic; it reads ANQKGIAAGP…TLPRWTWVLQ (83 aa). A helical membrane pass occupies residues 530 to 550; it reads LLLLAPIVLILVGQLALFLTA. Residues 551–563 are Vacuolar-facing; it reads SMCQVGSDGVSTF. The helical transmembrane segment at 564–584 threads the bilayer; it reads VVYLACSVFTTLLCIPLFPLI. Residues 585 to 590 are Cytoplasmic-facing; sequence HRFTYH. The chain crosses the membrane as a helical span at residues 591–611; the sequence is IPTFLFLVFIGTLIYNLVAFP. The Vacuolar segment spans residues 612-850; sequence FSPANRLKTF…VEASHSFTIQ (239 aa). Asn-630, Asn-658, and Asn-702 each carry an N-linked (GlcNAc...) asparagine glycan.

This sequence belongs to the peptidase M28 family. Requires Zn(2+) as cofactor.

Its subcellular location is the vacuole membrane. May be involved in vacuolar sorting and osmoregulation. This Ajellomyces capsulatus (strain NAm1 / WU24) (Darling's disease fungus) protein is Vacuolar membrane protease.